The primary structure comprises 444 residues: tRNA-2-methylthio-N(6)-dimethylallyladenosine synthase (444 aa).

The MTTase N-terminal domain maps to 10–126 (SSFYIHTFGC…LAGLVAGLRE (117 aa)). Cysteine 19, cysteine 55, cysteine 89, cysteine 163, cysteine 167, and cysteine 170 together coordinate [4Fe-4S] cluster. Residues 149–379 (RAGSISAFLP…IELQNAISRE (231 aa)) form the Radical SAM core domain. A TRAM domain is found at 382–444 (QREIGKTVEV…TSATLSGEAV (63 aa)).

This sequence belongs to the methylthiotransferase family. MiaB subfamily. Monomer. [4Fe-4S] cluster is required as a cofactor.

The protein localises to the cytoplasm. The catalysed reaction is N(6)-dimethylallyladenosine(37) in tRNA + (sulfur carrier)-SH + AH2 + 2 S-adenosyl-L-methionine = 2-methylsulfanyl-N(6)-dimethylallyladenosine(37) in tRNA + (sulfur carrier)-H + 5'-deoxyadenosine + L-methionine + A + S-adenosyl-L-homocysteine + 2 H(+). Functionally, catalyzes the methylthiolation of N6-(dimethylallyl)adenosine (i(6)A), leading to the formation of 2-methylthio-N6-(dimethylallyl)adenosine (ms(2)i(6)A) at position 37 in tRNAs that read codons beginning with uridine. The protein is tRNA-2-methylthio-N(6)-dimethylallyladenosine synthase of Chlorobaculum tepidum (strain ATCC 49652 / DSM 12025 / NBRC 103806 / TLS) (Chlorobium tepidum).